The chain runs to 301 residues: Homoserine O-acetyltransferase (301 aa).

Catalysis depends on Cys142, which acts as the Acyl-thioester intermediate. Residues Lys163 and Ser192 each coordinate substrate. The Proton acceptor role is filled by His235. Residue Glu237 is part of the active site. Position 249 (Arg249) interacts with substrate.

It belongs to the MetA family. Homodimer.

Its subcellular location is the cytoplasm. The enzyme catalyses L-homoserine + acetyl-CoA = O-acetyl-L-homoserine + CoA. It participates in amino-acid biosynthesis; L-methionine biosynthesis via de novo pathway; O-acetyl-L-homoserine from L-homoserine: step 1/1. Functionally, transfers an acetyl group from acetyl-CoA to L-homoserine, forming acetyl-L-homoserine. Utilizes a ping-pong kinetic mechanism in which the acetyl group of acetyl-CoA is initially transferred to the enzyme to form an acetyl-enzyme intermediate before subsequent transfer to homoserine to form the final product, O-acetylhomoserine. Cannot use succinyl-CoA as the acyl donor. In Bacillus cereus (strain ATCC 10987 / NRS 248), this protein is Homoserine O-acetyltransferase.